The chain runs to 338 residues: MNASQLVAIQVLLDNAAFAALMVATALYWLAAAFRRVPLLHELGTGASAVALLSVTGLLTARWIETDHFPVSNLYESLFFLCWCVLAVHIAAEAFARQRLVGVFTLPVALGMVAFSSLTLSPAMKAGGPLVPALKSNWLMMHVSVMILSYGALMVGSLVSIAFLIVTWKQKDPELRGSSVGTGGFQKAEYTDSESTPPAGSMLSSLGVGGSETTVTLTSATATAGTALRRSNLAETLDNLSYRLIGLGFPLITVGIIAGAVWANEAWGSYWSWDPKETWSLITWFIFAAYLHARITRGWQGRRPATLAAVGFVSVWITYLGVNFLAQGLHSYGWLSGN.

8 helical membrane-spanning segments follow: residues 11 to 31, 39 to 59, 76 to 96, 100 to 120, 145 to 165, 244 to 264, 278 to 295, and 305 to 325; these read VLLD…YWLA, LLHE…TGLL, ESLF…EAFA, LVGV…SLTL, VMIL…AFLI, LIGL…VWAN, TWSL…HARI, and ATLA…VNFL.

Belongs to the CcmF/CycK/Ccl1/NrfE/CcsA family. May interact with ccs1.

It localises to the cell inner membrane. Functionally, required during biogenesis of c-type cytochromes (cytochrome c6 and cytochrome f) at the step of heme attachment. The protein is Cytochrome c biogenesis protein CcsA of Gloeobacter violaceus (strain ATCC 29082 / PCC 7421).